The chain runs to 410 residues: MKNLVGRFMRYVTFDTQSKPKNHHCPSSTGQKVFAQALYEELLELGLSDVSLDDHGYVMAKLPSNVNYPVPAIGFIAHMDTSPDACGKHVKPQIVEDYQGGDIALGKGDEVLSPIQYPDLHLLHGYNLITTDGTTLLGADNKAGIAEIITAMEILLADSSIPHGDISIAFTPDEEIGRGANHFDVAKFAAQWAYTIDGGPIGELEYENFNAATATVVCHGVNLHPGTAKDKMVNAMHIAAQFILMMPENETPQHTEGYQGFYHLSGATMSVAKSELKYILRDFEASGLQARQALMQAKVAELNQQLKKGRVEVSFEQSYSNMKEKVEPHPHIIELAKQAMVACDVEPKIKPIRGGTDGARLSFMGLPCPNIFTGGYNFHGIHEFITIEGMEAAVQVIMKLAEKTALHYRQ.

Residue His-78 coordinates Zn(2+). Asp-80 is an active-site residue. Asp-140 is a Zn(2+) binding site. Glu-174 functions as the Proton acceptor in the catalytic mechanism. 3 residues coordinate Zn(2+): Glu-175, Asp-197, and His-379.

Belongs to the peptidase M20B family. Requires Zn(2+) as cofactor.

The protein resides in the cytoplasm. It catalyses the reaction Release of the N-terminal residue from a tripeptide.. In terms of biological role, cleaves the N-terminal amino acid of tripeptides. This Vibrio cholerae serotype O1 (strain ATCC 39541 / Classical Ogawa 395 / O395) protein is Peptidase T.